The chain runs to 517 residues: GMP synthase [glutamine-hydrolyzing] (517 aa).

In terms of domain architecture, Glutamine amidotransferase type-1 spans 9 to 199 (RILILDFGSQ…VLNVCGCEGL (191 aa)). C86 acts as the Nucleophile in catalysis. Residues H173 and E175 contribute to the active site. The GMPS ATP-PPase domain maps to 200 to 392 (WTSASIIEDA…LGLPYNMLYR (193 aa)). 227–233 (SGGVDSS) provides a ligand contact to ATP.

Homodimer.

It catalyses the reaction XMP + L-glutamine + ATP + H2O = GMP + L-glutamate + AMP + diphosphate + 2 H(+). Its pathway is purine metabolism; GMP biosynthesis; GMP from XMP (L-Gln route): step 1/1. Catalyzes the synthesis of GMP from XMP. The polypeptide is GMP synthase [glutamine-hydrolyzing] (Aliivibrio fischeri (strain MJ11) (Vibrio fischeri)).